We begin with the raw amino-acid sequence, 523 residues long: 26S proteasome regulatory subunit RPN3 (523 aa).

The residue at position 2 (alanine 2) is an N-acetylalanine. The 181-residue stretch at 270 to 450 (ARYFFYLSKI…GFIETTELLN (181 aa)) folds into the PCI domain. At serine 454 the chain carries Phosphoserine. Over residues 480–495 (RYPEDKKTQQNEKSEN) the composition is skewed to basic and acidic residues. The tract at residues 480-523 (RYPEDKKTQQNEKSENGENDDDTLDGDLMDDMSDISDLDDLGFL) is disordered. The segment covering 496–523 (GENDDDTLDGDLMDDMSDISDLDDLGFL) has biased composition (acidic residues).

It belongs to the proteasome subunit S3 family. The 26S proteasome is composed of a core protease, known as the 20S proteasome, capped at one or both ends by the 19S regulatory complex (RC). The RC is composed of at least 18 different subunits in two subcomplexes, the base and the lid, which form the portions proximal and distal to the 20S proteolytic core, respectively. In terms of processing, N-acetylated by NAT1.

Its function is as follows. Acts as a regulatory subunit of the 26S proteasome which is involved in the ATP-dependent degradation of ubiquitinated proteins. This Saccharomyces cerevisiae (strain ATCC 204508 / S288c) (Baker's yeast) protein is 26S proteasome regulatory subunit RPN3 (RPN3).